The sequence spans 327 residues: L-serine dehydratase/L-threonine deaminase (327 aa).

Position 41 is an N6-(pyridoxal phosphate)lysine (lysine 41).

It belongs to the serine/threonine dehydratase family. In terms of assembly, homodimer. Pyridoxal 5'-phosphate is required as a cofactor.

The protein resides in the cytoplasm. It catalyses the reaction L-serine = pyruvate + NH4(+). The enzyme catalyses L-threonine = 2-oxobutanoate + NH4(+). The protein operates within carbohydrate biosynthesis; gluconeogenesis. Functionally, catalyzes the pyridoxal-phosphate-dependent dehydrative deamination of L-threonine and L-serine to ammonia and alpha-ketobutyrate and pyruvate, respectively. This chain is L-serine dehydratase/L-threonine deaminase (SDS), found in Bos taurus (Bovine).